Consider the following 536-residue polypeptide: Chaperonin GroEL (536 aa).

Residues 29 to 32 (TLGP), 86 to 90 (DGTTT), Gly-413, and Asp-494 contribute to the ATP site.

Belongs to the chaperonin (HSP60) family. Forms a cylinder of 14 subunits composed of two heptameric rings stacked back-to-back. Interacts with the co-chaperonin GroES.

It is found in the cytoplasm. It carries out the reaction ATP + H2O + a folded polypeptide = ADP + phosphate + an unfolded polypeptide.. Together with its co-chaperonin GroES, plays an essential role in assisting protein folding. The GroEL-GroES system forms a nano-cage that allows encapsulation of the non-native substrate proteins and provides a physical environment optimized to promote and accelerate protein folding. The chain is Chaperonin GroEL from Acholeplasma laidlawii (strain PG-8A).